The primary structure comprises 251 residues: Octanoyltransferase (251 aa).

In terms of domain architecture, BPL/LPL catalytic spans Ala56–Asp241. Residues Arg96–His103, Ala168–Gly170, and Gly181–Ser183 contribute to the substrate site. The active-site Acyl-thioester intermediate is the Cys199.

The protein belongs to the LipB family.

It localises to the cytoplasm. It carries out the reaction octanoyl-[ACP] + L-lysyl-[protein] = N(6)-octanoyl-L-lysyl-[protein] + holo-[ACP] + H(+). The protein operates within protein modification; protein lipoylation via endogenous pathway; protein N(6)-(lipoyl)lysine from octanoyl-[acyl-carrier-protein]: step 1/2. Functionally, catalyzes the transfer of endogenously produced octanoic acid from octanoyl-acyl-carrier-protein onto the lipoyl domains of lipoate-dependent enzymes. Lipoyl-ACP can also act as a substrate although octanoyl-ACP is likely to be the physiological substrate. This Burkholderia cenocepacia (strain HI2424) protein is Octanoyltransferase.